The sequence spans 257 residues: Fimbrial assembly protein, serogroup I (257 aa).

This chain is Fimbrial assembly protein, serogroup I (fimB), found in Dichelobacter nodosus (Bacteroides nodosus).